Here is a 947-residue protein sequence, read N- to C-terminus: MADSDDEYDRKRRDKFRGERDSYRTERRDDRRPVGGSAGARDEWAERNPFRGAASAGGGGARHRPDYSDYRGPGARPRYGSPGRDLPPAKRMRPDWGDGDVRANPRFGGYDPYLMQAWNDHYQSMHSAYSHAGHAPPVRESIGGGGSDTLTQPAMLNLKQFLDTQDENISDSEVMRKYTEYKTDFKRQQLNEFFVAHKDEEWFKNKYHPEDSVKRSEEQRGFLQRRTDVFMELFENGTIGSVKVDSSQADALIRVLDTCVIKLEGGTDEDLKVLDEKPKDPVVYERKAEPMQSVKAVEKTINSPKDEITEADPLPVVVSTQRKPVGPVNSDEENWDDDNDAENSAPKKELAEDSKDSDSKPEDKQLNKKKTKKRKRNSSDDDSSSSESSSSSDEEKLKEKYDVEDGLRTEQKIEAEKDRQEATKAKQEPQSPKLDEVEGNDTTEPKGLDSKINTVEIDDTLKSPEISSNPIKNTDNGDSSKVEEDEEKPSVGKDNVVETETIDLDKVKDCQPRALHRTSSIFLRNLAPSITRSEIEAVCNRFNGYLRVAIADPLVERRWYRRGWITFMRDVNIKEICWGLNNQRLRDCEMGAIVNRDLSRRVRPANGITAHKQVVRSDIKLCAKIALNLDEKFRLWAEVPKDDSNSARANESSENGSGSTYGFNSQNPVLQNITDYLIEEASAEEEELLGLTGENKDTEGEPIERDEQLISVLDRLVLYLRIVHSVDYYNHCEYPYEDEMPNRCGIIHARGPPPVRVTNNDVQEYIKMYETKLQQFLTKTVPLSDEEIKNLGAKDAETEVEKFVQANTQELAKDKWLCPLSGKKFKGPEFIRKHIFNKHEEKVDEVRKEVQYFNNYLRDPKRPQLPEHPGTSKRPESESARGGGGGYRPPMYPPFSAMPYGFGPPMRGGGRAGRNFPPARRELPLEHQRRLIGYHDLDAPANSDMFD.

4 disordered regions span residues 1–100, 300–492, 643–666, and 855–892; these read MADS…GDGD, TINS…PSVG, DSNS…FNSQ, and NYLR…PPMY. Basic and acidic residues-rich tracts occupy residues 8–33 and 40–49; these read YDRK…DRRP and ARDEWAERNP. Tyr79 carries the phosphotyrosine modification. At Ser81 the chain carries Phosphoserine. Phosphothreonine is present on Thr300. Phosphoserine is present on residues Ser303, Ser330, Ser354, and Ser357. Residues 330-341 show a composition bias toward acidic residues; that stretch reads SDEENWDDDNDA. A compositionally biased stretch (basic and acidic residues) spans 345 to 366; it reads APKKELAEDSKDSDSKPEDKQL. The span at 367–376 shows a compositional bias: basic residues; the sequence is NKKKTKKRKR. Basic and acidic residues predominate over residues 393–427; it reads DEEKLKEKYDVEDGLRTEQKIEAEKDRQEATKAKQ. Position 431 is a phosphoserine (Ser431). The span at 465–479 shows a compositional bias: polar residues; the sequence is EISSNPIKNTDNGDS. Phosphoserine occurs at positions 644 and 646. Over residues 646-657 the composition is skewed to low complexity; it reads SARANESSENGS.

The protein belongs to the ARS2 family. As to quaternary structure, interacts with cbp20, Dcr-2 and pasha.

The protein localises to the nucleus. Functionally, acts as a mediator between the cap-binding complex (CBC) and RNA-mediated gene silencing (RNAi). Involved in innate immunity via the short interfering RNAs (siRNAs) processing machinery by restricting the viral RNA production. Also involved microRNA (miRNA)-mediated silencing by contributing to the stability and delivery of primary miRNA transcripts to the primary miRNA processing complex containing drosha and pasha. The protein is Serrate RNA effector molecule homolog (Ars2) of Drosophila simulans (Fruit fly).